The sequence spans 267 residues: 2-keto-3-deoxy-L-rhamnonate aldolase (267 aa).

The active-site Proton acceptor is the His49. Residue Gln151 coordinates substrate. Glu153 lines the Mg(2+) pocket. The substrate site is built by Ala178 and Asp179. Asp179 lines the Mg(2+) pocket.

This sequence belongs to the HpcH/HpaI aldolase family. KDR aldolase subfamily. Homohexamer. It depends on Mg(2+) as a cofactor. Requires Ni(2+) as cofactor.

The enzyme catalyses 2-dehydro-3-deoxy-L-rhamnonate = (S)-lactaldehyde + pyruvate. The catalysed reaction is D-glyceraldehyde + 3-hydroxypyruvate = (3R,4S,5R)-3,4,5,6-tetrahydroxy-2-oxohexanoate. It carries out the reaction D-glyceraldehyde + 3-hydroxypyruvate = 2-dehydro-D-gluconate. It catalyses the reaction D-glyceraldehyde + 3-hydroxypyruvate = 2-dehydro-D-galactonate. The enzyme catalyses D-glyceraldehyde + pyruvate = 2-dehydro-3-deoxy-L-galactonate. The catalysed reaction is 2-dehydro-3-deoxy-D-gluconate = D-glyceraldehyde + pyruvate. In terms of biological role, catalyzes the reversible retro-aldol cleavage of 2-keto-3-deoxy-L-rhamnonate (KDR) to pyruvate and lactaldehyde. 2-keto-3-deoxy-L-mannonate, 2-keto-3-deoxy-L-lyxonate and 4-hydroxy-2-ketoheptane-1,7-dioate (HKHD) are also reasonably good substrates, although 2-keto-3-deoxy-L-rhamnonate is likely to be the physiological substrate. In vitro, can catalyze the aldolisation reaction between hydroxypyruvate (HPA) or pyruvate (PA) and D-glyceraldehyde (D-GA). The condensation of hydroxypyruvate and D-glyceraldehyde produces (3R,4S,5R)-3,4,5,6-tetrahydroxy-2-oxohexanoate as the major product, 2-dehydro-D-gluconate and 2-dehydro-D-galactonate. The condensation of pyruvate and D-glyceraldehyde produces 2-dehydro-3-deoxy-L-galactonate as the major product and 2-dehydro-3-deoxy-D-gluconate. The chain is 2-keto-3-deoxy-L-rhamnonate aldolase (rhmA) from Escherichia coli (strain K12).